A 325-amino-acid polypeptide reads, in one-letter code: Diaminopimelate epimerase (325 aa).

The substrate site is built by asparagine 11 and asparagine 69. Cysteine 78 acts as the Proton donor in catalysis. Substrate contacts are provided by residues 79–80 (GN), asparagine 166, asparagine 203, and 221–222 (ER). Cysteine 230 acts as the Proton acceptor in catalysis. 231–232 (GT) provides a ligand contact to substrate.

It belongs to the diaminopimelate epimerase family. As to quaternary structure, homodimer.

The protein resides in the cytoplasm. The catalysed reaction is (2S,6S)-2,6-diaminopimelate = meso-2,6-diaminopimelate. The protein operates within amino-acid biosynthesis; L-lysine biosynthesis via DAP pathway; DL-2,6-diaminopimelate from LL-2,6-diaminopimelate: step 1/1. Its function is as follows. Catalyzes the stereoinversion of LL-2,6-diaminopimelate (L,L-DAP) to meso-diaminopimelate (meso-DAP), a precursor of L-lysine and an essential component of the bacterial peptidoglycan. This is Diaminopimelate epimerase from Ligilactobacillus salivarius (strain UCC118) (Lactobacillus salivarius).